Here is a 440-residue protein sequence, read N- to C-terminus: UDP-glycosyltransferase 87A1 (440 aa).

UDP-alpha-D-glucose-binding positions include Ser263, 312-314, 329-337, and 351-354; these read CDQ, HCGYNSTLE, and FWDQ.

Belongs to the UDP-glycosyltransferase family.

The protein is UDP-glycosyltransferase 87A1 (UGT87A1) of Arabidopsis thaliana (Mouse-ear cress).